The following is a 25-amino-acid chain: Glucomannokinase (25 aa).

It belongs to the ROK (NagC/XylR) family. In terms of assembly, homodimer.

The catalysed reaction is D-glucose + ATP = D-glucose 6-phosphate + ADP + H(+). It carries out the reaction D-mannose + ATP = D-mannose 6-phosphate + ADP + H(+). It participates in carbohydrate degradation; glycolysis; D-glyceraldehyde 3-phosphate and glycerone phosphate from D-glucose: step 1/4. The protein operates within carbohydrate metabolism; mannose metabolism. With respect to regulation, competitively inhibited by 2-deoxy-glucose. The enzyme has great affinity for glucose and mannose. The sequence is that of Glucomannokinase from Segatella bryantii (Prevotella bryantii).